The sequence spans 485 residues: MSIQGTILVVDDEVRSQEALRRVLREDFEVLCVGNATDAEKLLEGEIVHAILCDQRMPHESGVSFLKRVRELWPDPVRMIISGYSESEDIIAGLNEAGIYQYITKPWQPDQLVETVKEAVQLYRLQKETETAGVDVKATSGHIKKVVSVKRGVAKQLYDFDRIVHSTESPMHAVIELGRRAADYDISVLITGESGTGKELLARAIHYGSARANRAFVVENCGALPDELLESELFGCKKGAFTGAYQDRIGLFEVADGGTIFLDEIGETSPAFQVKLLRVLQESEIRPLGAQRVRKVDVRVVAATNRDLEAEVEAGRFRRDLYYRLAAFPVHMPALRERPMDIPLIAEGVLSAVKSSFNRPNLRFARSALEEFGKYHWPGNVRELQNEIQRMAVLADRDELAAPPLLGRRNGKRSAPLPAHGRLNGSASLKDKVEDLEKSVIMNCLERNDGNISRVASELGLSRVGLRNKLSRYDLRKNAKGDAFS.

The 115-residue stretch at 6 to 120 folds into the Response regulatory domain; sequence TILVVDDEVR…QLVETVKEAV (115 aa). Residue Asp-54 is modified to 4-aspartylphosphate. The 227-residue stretch at 166–392 folds into the Sigma-54 factor interaction domain; the sequence is STESPMHAVI…ELQNEIQRMA (227 aa). ATP contacts are provided by residues 192–199 and 264–273; these read GESGTGKE and EIGETSPAFQ. Residues 404–426 are disordered; the sequence is PLLGRRNGKRSAPLPAHGRLNGS. The segment at residues 451–470 is a DNA-binding region (H-T-H motif); sequence NISRVASELGLSRVGLRNKL.

The protein resides in the cytoplasm. Its function is as follows. Probable member of the two-component regulatory system involved in the regulation of the hydrogenase activity. HoxA is probably phosphorylated by a sensory component (which could be HoxX) and then acts in conjunction with sigma-54 as a transcriptional activator. The sequence is that of Hydrogenase transcriptional regulatory protein HoxA (hoxA) from Bradyrhizobium diazoefficiens (strain JCM 10833 / BCRC 13528 / IAM 13628 / NBRC 14792 / USDA 110).